Here is an 82-residue protein sequence, read N- to C-terminus: Conotoxin Tx6.6 (82 aa).

The first 19 residues, 1 to 19, serve as a signal peptide directing secretion; sequence MKLTCVMIVAVLFLTAWTL. The propeptide occupies 20-51; it reads VMADDSNNGLANLFSKLRDEMEDPEGSKLEKK. Cystine bridges form between cysteine 53–cysteine 71, cysteine 60–cysteine 76, and cysteine 70–cysteine 81. Alanine 82 carries the alanine amide; partial modification.

Belongs to the O1 superfamily. Expressed by the venom duct.

It localises to the secreted. Its function is as follows. Omega-conotoxins act at presynaptic membranes, they bind and block voltage-gated calcium channels (Cav). This is Conotoxin Tx6.6 from Conus textile (Cloth-of-gold cone).